The chain runs to 255 residues: uncharacterized protein (255 aa).

Residues Cys122 and Cys160 each contribute to the [4Fe-4S] cluster site.

As to quaternary structure, homodimer. [4Fe-4S] cluster serves as cofactor.

This is an uncharacterized protein from Escherichia coli (strain K12).